Consider the following 263-residue polypeptide: MRMSCNGCRVLRKGCSEDCSIRPCLAWIKSPEAQANATVFLAKFYGRAGLMNLINAGPNHLRPGIFRSLLHEACGRIVNPIYGSVGLLWSGNWQLCQDAVEAVMKGEPVKEIATDAATIGQGPPLKIYDIRHISKDDNSAAAATGSTDLKLAKTRRAKRVSTVAIQAESEGKSDEASHDSSLSHQSEIVAAHEGESKESESNVSEVLAFSPPAVKGSGEIKLDLTLRLEPVSRAYHVVPVKKRRIGVFGTCQKESTCKTELML.

Positions 3–109 constitute an LOB domain; sequence MSCNGCRVLR…VEAVMKGEPV (107 aa). A disordered region spans residues 162 to 204; it reads TVAIQAESEGKSDEASHDSSLSHQSEIVAAHEGESKESESNVS. Composition is skewed to basic and acidic residues over residues 169–178 and 190–200; these read SEGKSDEASH and AAHEGESKESE.

It belongs to the LOB domain-containing protein family. In terms of tissue distribution, expressed in young shoots, roots, stems, leaves and flowers.

The chain is LOB domain-containing protein 41 (LBD41) from Arabidopsis thaliana (Mouse-ear cress).